Consider the following 415-residue polypeptide: Tyrosine--tRNA ligase (415 aa).

Tyr40 contributes to the L-tyrosine binding site. The 'HIGH' region motif lies at 45-54 (ATAKSLHVGS). The L-tyrosine site is built by Tyr178 and Gln182. The 'KMSKS' region signature appears at 238–242 (KMGKS). ATP is bound at residue Lys241. The S4 RNA-binding domain maps to 350–414 (ASIVQLIVKT…GKKRHALVQL (65 aa)).

It belongs to the class-I aminoacyl-tRNA synthetase family. TyrS type 1 subfamily. Homodimer.

Its subcellular location is the cytoplasm. The enzyme catalyses tRNA(Tyr) + L-tyrosine + ATP = L-tyrosyl-tRNA(Tyr) + AMP + diphosphate + H(+). Its function is as follows. Catalyzes the attachment of tyrosine to tRNA(Tyr) in a two-step reaction: tyrosine is first activated by ATP to form Tyr-AMP and then transferred to the acceptor end of tRNA(Tyr). This chain is Tyrosine--tRNA ligase, found in Ruegeria pomeroyi (strain ATCC 700808 / DSM 15171 / DSS-3) (Silicibacter pomeroyi).